Consider the following 71-residue polypeptide: Small ribosomal subunit protein bS21 (71 aa).

This sequence belongs to the bacterial ribosomal protein bS21 family.

This Thioalkalivibrio sulfidiphilus (strain HL-EbGR7) protein is Small ribosomal subunit protein bS21.